Reading from the N-terminus, the 119-residue chain is Large ribosomal subunit protein bL20 (119 aa).

It belongs to the bacterial ribosomal protein bL20 family.

Binds directly to 23S ribosomal RNA and is necessary for the in vitro assembly process of the 50S ribosomal subunit. It is not involved in the protein synthesizing functions of that subunit. The chain is Large ribosomal subunit protein bL20 from Saccharophagus degradans (strain 2-40 / ATCC 43961 / DSM 17024).